The sequence spans 463 residues: Argininosuccinate lyase (463 aa).

2-(N(omega)-L-arginino)succinate contacts are provided by S27, N115, and T161. The active-site Proton acceptor is the H162. S283 (proton donor) is an active-site residue. 4 residues coordinate 2-(N(omega)-L-arginino)succinate: N291, Y323, Q328, and K331.

This sequence belongs to the lyase 1 family. Argininosuccinate lyase subfamily. Homotetramer.

The enzyme catalyses 2-(N(omega)-L-arginino)succinate = fumarate + L-arginine. It participates in amino-acid biosynthesis; L-arginine biosynthesis; L-arginine from L-ornithine and carbamoyl phosphate: step 3/3. In Saccharomyces paradoxus (Yeast), this protein is Argininosuccinate lyase (ARG4).